The sequence spans 273 residues: MKKTVTAVALLCALSSTAIAPTFAADDDEAARLKAIEEYRKQIADGNPSDLLAMEGEELWRTPYGPKNQSLEQCDLGLGPGVVKGAAAKLPRYFPDTGKVEDLESRLMTCMERLQGVERQKVIDSPWRKGEKLRMDKIVAYIVTESNGEKIDVDMSHPKMKEMYELGKRMFFYRTGPFDFSCATCHGKDGQRIRLQELPNLTKHEGAAAGWGSWPAYRVSNSQFWTMQMRLNDCFRQQRTAEPIYGSDATIALSVYMAANGNGGVMLTPGIKR.

The signal sequence occupies residues 1-24 (MKKTVTAVALLCALSSTAIAPTFA). Cys74 and Cys110 are oxidised to a cystine. One can recognise a Cytochrome c domain in the interval 162 to 273 (EMYELGKRMF…GVMLTPGIKR (112 aa)). Heme is bound by residues Cys182 and His186. Arg230 is a substrate binding site. Cys234 contributes to the heme binding site. Catalysis depends on Cys234, which acts as the Cysteine persulfide intermediate.

It belongs to the SoxA family. Heterodimer of SoxA and SoxX. Requires heme as cofactor. Cysteine persulfide at Cys-234.

It localises to the periplasm. It carries out the reaction L-cysteinyl-[SoxY protein] + thiosulfate + 2 Fe(III)-[cytochrome c] = S-sulfosulfanyl-L-cysteinyl-[SoxY protein] + 2 Fe(II)-[cytochrome c] + 2 H(+). The enzyme catalyses S-sulfanyl-L-cysteinyl-[SoxY protein] + thiosulfate + 2 Fe(III)-[cytochrome c] = S-(2-sulfodisulfanyl)-L-cysteinyl-[SoxY protein] + 2 Fe(II)-[cytochrome c] + 2 H(+). In terms of biological role, C-type monoheme cytochrome, which is part of the SoxAX cytochrome complex involved in sulfur oxidation. The SoxAX complex catalyzes the formation of a heterodisulfide bond between the conserved cysteine residue on a sulfur carrier SoxYZ complex subunit SoxY and thiosulfate or other inorganic sulfur substrates. This leads to the liberation of two electrons, which may be transferred from the SoxAX complex to another cytochrome c that then channels them into the respiratory electron transport chain. Some electrons may be used for reductive CO(2) fixation. This Hydrogenophilus thermoluteolus (Pseudomonas hydrogenothermophila) protein is L-cysteine S-thiosulfotransferase subunit SoxA.